The sequence spans 397 residues: Ribosomal RNA large subunit methyltransferase I (397 aa).

Positions 2–81 constitute a PUA domain; it reads SAQVILQPSR…ESIDNGFFLR (80 aa).

The protein belongs to the methyltransferase superfamily. RlmI family.

The protein localises to the cytoplasm. It carries out the reaction cytidine(1962) in 23S rRNA + S-adenosyl-L-methionine = 5-methylcytidine(1962) in 23S rRNA + S-adenosyl-L-homocysteine + H(+). Its function is as follows. Specifically methylates the cytosine at position 1962 (m5C1962) of 23S rRNA. This chain is Ribosomal RNA large subunit methyltransferase I, found in Alteromonas mediterranea (strain DSM 17117 / CIP 110805 / LMG 28347 / Deep ecotype).